The following is a 136-amino-acid chain: Small ribosomal subunit protein uS11 (136 aa).

The protein belongs to the universal ribosomal protein uS11 family. In terms of assembly, part of the 30S ribosomal subunit. Interacts with proteins S7 and S18. Binds to IF-3.

In terms of biological role, located on the platform of the 30S subunit, it bridges several disparate RNA helices of the 16S rRNA. Forms part of the Shine-Dalgarno cleft in the 70S ribosome. This Leptospira borgpetersenii serovar Hardjo-bovis (strain JB197) protein is Small ribosomal subunit protein uS11.